Here is a 330-residue protein sequence, read N- to C-terminus: MTLIVTGAAGFIGANIVKALNERGESRIIAVDNLTRADKFRNLVDCEIDDYLDKTEFVERFARGDFGKVRAVFHEGACSDTMETDGRYMMDNNFRYSRAVLDACLAQGAQFLYASSAAIYGGSTRFVEEREVEAPLNVYGYSKFLFDQVIRRVLPSARSQIAGFRYFNVYGPRETHKGRMASVAFHNFNQFRAEGKVKLFGEYNGYAPGEQTRDFVSVEDVAKVNLFFFDHPEKSGIFNLGTGRAQPFNDIASTVVNTLRALDNLPPLTLAQQVEQGLIEYVAFPDALRGKYQCFTQADQTKLRAAGYDAPFLTVQEGVDRYVRWLSGQV.

Residues 11–12 (FI), 32–33 (DN), lysine 39, lysine 54, 75–79 (EGACS), and asparagine 92 contribute to the NADP(+) site. Residue tyrosine 139 is the Proton acceptor of the active site. Lysine 143 provides a ligand contact to NADP(+). Position 168 (asparagine 168) interacts with substrate. Valine 169 and lysine 177 together coordinate NADP(+). Lysine 177 serves as the catalytic Proton acceptor. Residues arginine 179, histidine 186, 200 to 203 (FGEY), arginine 213, and tyrosine 292 each bind substrate.

It belongs to the NAD(P)-dependent epimerase/dehydratase family. HldD subfamily. Homopentamer. Requires NADP(+) as cofactor.

It catalyses the reaction ADP-D-glycero-beta-D-manno-heptose = ADP-L-glycero-beta-D-manno-heptose. It participates in nucleotide-sugar biosynthesis; ADP-L-glycero-beta-D-manno-heptose biosynthesis; ADP-L-glycero-beta-D-manno-heptose from D-glycero-beta-D-manno-heptose 7-phosphate: step 4/4. Catalyzes the interconversion between ADP-D-glycero-beta-D-manno-heptose and ADP-L-glycero-beta-D-manno-heptose via an epimerization at carbon 6 of the heptose. This is ADP-L-glycero-D-manno-heptose-6-epimerase from Burkholderia vietnamiensis (strain G4 / LMG 22486) (Burkholderia cepacia (strain R1808)).